We begin with the raw amino-acid sequence, 203 residues long: Molybdenum cofactor guanylyltransferase (203 aa).

GTP contacts are provided by residues 20–22 (LAG), Lys33, Asn61, Asp78, and Asp108. Asp108 lines the Mg(2+) pocket.

This sequence belongs to the MobA family. In terms of assembly, monomer. The cofactor is Mg(2+).

It is found in the cytoplasm. The catalysed reaction is Mo-molybdopterin + GTP + H(+) = Mo-molybdopterin guanine dinucleotide + diphosphate. Its function is as follows. Transfers a GMP moiety from GTP to Mo-molybdopterin (Mo-MPT) cofactor (Moco or molybdenum cofactor) to form Mo-molybdopterin guanine dinucleotide (Mo-MGD) cofactor. The polypeptide is Molybdenum cofactor guanylyltransferase (Vibrio cholerae serotype O1 (strain ATCC 39315 / El Tor Inaba N16961)).